The primary structure comprises 391 residues: Nucleosome assembly protein 1-like 1 (391 aa).

Residues 1 to 10 are compositionally biased toward basic and acidic residues; it reads MADIDNKEQS. The tract at residues 1-32 is disordered; it reads MADIDNKEQSELDQDLEDVEEVEEEETGEETK. Ala-2 is modified (N-acetylalanine). Position 10 is a phosphoserine (Ser-10). Positions 11-28 are enriched in acidic residues; the sequence is ELDQDLEDVEEVEEEETG. A phosphothreonine mark is found at Thr-62 and Thr-64. Ser-69 bears the Phosphoserine mark. The residue at position 116 (Lys-116) is an N6-acetyllysine. Residues 125-150 carry the NAP1L motif motif; it reads YEPTEEECEWKPDEEDEVSEELKEKA. Residues 131–143 are compositionally biased toward acidic residues; sequence ECEWKPDEEDEVS. Positions 131-163 are disordered; sequence ECEWKPDEEDEVSEELKEKAKIEDEKKDEEKED. Phosphoserine is present on Ser-143. The segment covering 144–163 has biased composition (basic and acidic residues); it reads EELKEKAKIEDEKKDEEKED. Residues 273–279 carry the Nuclear localization signal motif; the sequence is IKKKQKH. Residues 346–376 are compositionally biased toward acidic residues; it reads AIEDDDDDYDEEGEEADEEGEEEGDEENDPD. The tract at residues 346–391 is disordered; sequence AIEDDDDDYDEEGEEADEEGEEEGDEENDPDYDPKKDQNPAECKQQ. 5-glutamyl polyglycine occurs at positions 359 and 360. The span at 377-391 shows a compositional bias: basic and acidic residues; the sequence is YDPKKDQNPAECKQQ. At Cys-388 the chain carries Cysteine methyl ester. Residue Cys-388 is the site of S-farnesyl cysteine attachment. Residues 389–391 constitute a propeptide, removed in mature form; that stretch reads KQQ.

This sequence belongs to the nucleosome assembly protein (NAP) family. Homodimer. The dimer binds strongly and sequentially to single and double H2A-H2B heterodimers. Interacts with ERCC6; this interaction increases ERCC6 processivity. Interacts with RAD54. Interacts with SETD1A. Polyglycylated by TTLL10 on glutamate residues, resulting in polyglycine chains on the gamma-carboxyl group. Both polyglutamylation and polyglycylation modifications can coexist on the same protein on adjacent residues, and lowering polyglycylation levels increases polyglutamylation, and reciprocally. In terms of processing, polyglutamylated by TTLL4 on glutamate residues, resulting in polyglutamate chains on the gamma-carboxyl group. Both polyglutamylation and polyglycylation modifications can coexist on the same protein on adjacent residues, and lowering polyglycylation levels increases polyglutamylation, and reciprocally. Highly expressed in the brain (at protein level). High expression in cerebral cortex, not in cerebellar cortex.

The protein resides in the nucleus. The protein localises to the cytoplasm. It localises to the melanosome. Histone chaperone that plays a role in the nuclear import of H2A-H2B and nucleosome assembly. Also participates in several important DNA repair mechanisms: greatly enhances ERCC6-mediated chromatin remodeling which is essential for transcription-coupled nucleotide excision DNA repair. Also stimulates homologous recombination (HR) by RAD51 and RAD54 which is essential in mitotic DNA double strand break (DSB) repair. Plays a key role in the regulation of embryonic neurogenesis. Promotes the proliferation of neural progenitors and inhibits neuronal differentiation during cortical development. Regulates neurogenesis via the modulation of RASSF10; regulates RASSF10 expression by promoting SETD1A-mediated H3K4 methylation at the RASSF10 promoter. This Mus musculus (Mouse) protein is Nucleosome assembly protein 1-like 1 (Nap1l1).